The following is a 178-amino-acid chain: CRISPR system ring nuclease SSO2081 (178 aa).

The interval 105–106 (RK) is transition state stabilizer.

This sequence belongs to the cOA ring nuclease family. As to quaternary structure, homodimer. It depends on Does not require a metal cofactor. as a cofactor.

Its subcellular location is the cytoplasm. The catalysed reaction is cyclic tetraadenylate = 2 5'-hydroxy-diadenylate 2',3'-cylic phosphate. In terms of biological role, CRISPR (clustered regularly interspaced short palindromic repeat) is an adaptive immune system that provides protection against mobile genetic elements (viruses, transposable elements and conjugative plasmids). CRISPR clusters contain spacers, sequences complementary to antecedent mobile elements, and target invading nucleic acids. CRISPR clusters are transcribed and processed into CRISPR RNA (crRNA). A nuclease that degrades cyclic oligoadenylates (cOA), second messengers that induce an antiviral state important for defense against invading nucleic acids. Destruction of cOA deactivates the Csx1 ribonuclease, preventing uncontrolled degradation of cellular RNA. Degrades cA4 (a tetraadenylate ring) into a linear diadenylate product with 5'-OH and 2',3'-cyclic phosphate termini. Is 10-fold more active than SSO1393, suggesting this is the major cA4 degradation enzyme. Is highly specific for cA4; it has very poor activity on cA6 and no discernible activity against a number of cyclic dinucleotides. There may be 2 active sites per homodimer. The polypeptide is CRISPR system ring nuclease SSO2081 (Saccharolobus solfataricus (strain ATCC 35092 / DSM 1617 / JCM 11322 / P2) (Sulfolobus solfataricus)).